We begin with the raw amino-acid sequence, 127 residues long: MACTREDVIEYISNLSVLELSELVKEFEEKFGVSAQPTVVAGAVAAGGAEGGAAAEEKTEFDVVLTDAGPKKINTIKVIRQVTGLGLKEAKEAAENTPTVIKEGVSKEEAEELKKQFEEAGAKVEIK.

The protein belongs to the bacterial ribosomal protein bL12 family. As to quaternary structure, homodimer. Part of the ribosomal stalk of the 50S ribosomal subunit. Forms a multimeric L10(L12)X complex, where L10 forms an elongated spine to which 2 to 4 L12 dimers bind in a sequential fashion. Binds GTP-bound translation factors.

In terms of biological role, forms part of the ribosomal stalk which helps the ribosome interact with GTP-bound translation factors. Is thus essential for accurate translation. The protein is Large ribosomal subunit protein bL12 of Nitratiruptor sp. (strain SB155-2).